A 616-amino-acid chain; its full sequence is uncharacterized protein (616 aa).

The protein belongs to the UbiD family.

This is an uncharacterized protein from Helicobacter pylori (strain ATCC 700392 / 26695) (Campylobacter pylori).